A 99-amino-acid chain; its full sequence is Cysteine-rich C-terminal protein 1 (99 aa).

Disordered regions lie at residues M1 to S42 and R65 to C99. The span at A22–A32 shows a compositional bias: pro residues. The segment covering Q83–C99 has biased composition (low complexity).

This chain is Cysteine-rich C-terminal protein 1 (CRCT1), found in Homo sapiens (Human).